We begin with the raw amino-acid sequence, 300 residues long: MDEYHIPVLLDEILSFLVKEKNGIYIDTTFGGGGHSLSLLNKLSNKGRVIAFDKDIDSIKNNNILDARFNLIKTNYRFIKKKIKLFNLNKVSGILADLGISSHQINSPKRGFSIRYNSILDMRMDTYNKINAQHIINNYSYNELYNLLIRFGEVKNAKNISKLILKHRKKKYIKSTFDLIKILNFFYKKKNKFLSKIFQSLRIEVNDEINALKDLLKNSLSILKPGGRIAVISYHSIEDRIVKKFLKTGNFNGIIPYDEYGNNLSPLILLEPRIIFSSKEEKKENNRSRSAILRIAEKKI.

S-adenosyl-L-methionine-binding positions include 33–35 (GGH), aspartate 53, phenylalanine 78, aspartate 97, and glutamine 104.

Belongs to the methyltransferase superfamily. RsmH family.

It is found in the cytoplasm. It catalyses the reaction cytidine(1402) in 16S rRNA + S-adenosyl-L-methionine = N(4)-methylcytidine(1402) in 16S rRNA + S-adenosyl-L-homocysteine + H(+). Specifically methylates the N4 position of cytidine in position 1402 (C1402) of 16S rRNA. The protein is Ribosomal RNA small subunit methyltransferase H of Karelsulcia muelleri (strain GWSS) (Sulcia muelleri).